Here is a 268-residue protein sequence, read N- to C-terminus: 4-pyridoxolactonase (268 aa).

His96, His98, Asp100, His101, His185, Asp207, and His252 together coordinate Zn(2+). Catalysis depends on Asp100, which acts as the Proton donor/acceptor.

It belongs to the metallo-beta-lactamase superfamily. As to quaternary structure, homodimer. The cofactor is Zn(2+).

It catalyses the reaction 4-pyridoxolactone + H2O = 4-pyridoxate + H(+). It participates in cofactor degradation; B6 vitamer degradation; 4-pyridoxate from pyridoxal: step 2/2. With respect to regulation, inhibited by Hg(2+). Functionally, involved in the degradation of pyridoxine or pyridoxamine (free, phosphate-unbound, forms of vitamin B6). Hydrolyzes 4-pyridoxolactone to 4-pyridoxic acid. Has lower activity toward N-hexanoyl-D,L-homoserine lactone, but is not active toward 5-pyridoxolactone and gamma-butyrolactone. This Mesorhizobium japonicum (strain LMG 29417 / CECT 9101 / MAFF 303099) (Mesorhizobium loti (strain MAFF 303099)) protein is 4-pyridoxolactonase.